A 240-amino-acid chain; its full sequence is uncharacterized protein (240 aa).

Residues 1 to 85 are Cytoplasmic-facing; the sequence is MSGFIKSTLL…LCGCCCWTNT (85 aa). The helical transmembrane segment at 86-106 threads the bilayer; sequence IGWAPLLALLPVIGPLLMYWV. Over 107–131 the chain is Extracellular; it reads HDKLIELADDRYKLPAEIKVKMHGN. The chain crosses the membrane as a helical span at residues 132–152; the sequence is IVIDLLISLVPILGSVFAWLH. Residues 153-240 are Cytoplasmic-facing; the sequence is ACSTRNAAIV…TNGRPQRGYR (88 aa). Residues 181-240 form a disordered region; it reads QKEENEKHSNANTAPPVVGGNKNVNGNRNNSKMYNRPPVTAPPAPAYTRSTNGRPQRGYR. Over residues 197–210 the composition is skewed to low complexity; it reads VVGGNKNVNGNRNN.

It is found in the membrane. This is an uncharacterized protein from Saccharomyces cerevisiae (strain ATCC 204508 / S288c) (Baker's yeast).